Reading from the N-terminus, the 256-residue chain is Enolase-phosphatase E1 (256 aa).

Asp-13 and Glu-15 together coordinate Mg(2+). Substrate-binding positions include 127-128 (SS) and Lys-175. Asp-202 provides a ligand contact to Mg(2+).

Belongs to the HAD-like hydrolase superfamily. MasA/MtnC family. Monomer. Mg(2+) serves as cofactor.

It is found in the cytoplasm. The protein localises to the nucleus. It catalyses the reaction 5-methylsulfanyl-2,3-dioxopentyl phosphate + H2O = 1,2-dihydroxy-5-(methylsulfanyl)pent-1-en-3-one + phosphate. The protein operates within amino-acid biosynthesis; L-methionine biosynthesis via salvage pathway; L-methionine from S-methyl-5-thio-alpha-D-ribose 1-phosphate: step 3/6. It functions in the pathway amino-acid biosynthesis; L-methionine biosynthesis via salvage pathway; L-methionine from S-methyl-5-thio-alpha-D-ribose 1-phosphate: step 4/6. Bifunctional enzyme that catalyzes the enolization of 2,3-diketo-5-methylthiopentyl-1-phosphate (DK-MTP-1-P) into the intermediate 2-hydroxy-3-keto-5-methylthiopentenyl-1-phosphate (HK-MTPenyl-1-P), which is then dephosphorylated to form the acireductone 1,2-dihydroxy-3-keto-5-methylthiopentene (DHK-MTPene). In Botryotinia fuckeliana (strain B05.10) (Noble rot fungus), this protein is Enolase-phosphatase E1 (utr4).